The following is a 130-amino-acid chain: EG45-like domain containing protein 2 (130 aa).

Positions Met1–Ala25 are cleaved as a signal peptide. The Expansin-like EG45 domain maps to Gly28–Ile130. N-linked (GlcNAc...) asparagine glycosylation occurs at Asn106.

Expressed in unstressed leaves.

It localises to the secreted. Plays a systemic role in water and solute homeostasis. The polypeptide is EG45-like domain containing protein 2 (EGC2) (Arabidopsis thaliana (Mouse-ear cress)).